Consider the following 281-residue polypeptide: NAD kinase (281 aa).

Asp-61 serves as the catalytic Proton acceptor. NAD(+) contacts are provided by residues 61–62 (DG), 134–135 (ND), Arg-145, Asp-164, 175–180 (TAYSLS), and Gln-234.

Belongs to the NAD kinase family. A divalent metal cation serves as cofactor.

It is found in the cytoplasm. The enzyme catalyses NAD(+) + ATP = ADP + NADP(+) + H(+). Functionally, involved in the regulation of the intracellular balance of NAD and NADP, and is a key enzyme in the biosynthesis of NADP. Catalyzes specifically the phosphorylation on 2'-hydroxyl of the adenosine moiety of NAD to yield NADP. The protein is NAD kinase of Clostridium botulinum (strain Loch Maree / Type A3).